The following is an 840-amino-acid chain: Leucine--tRNA ligase (840 aa).

A 'HIGH' region motif is present at residues 44 to 55 (PYPSANGLHVGH). Positions 617-621 (KMSKS) match the 'KMSKS' region motif. K620 provides a ligand contact to ATP.

It belongs to the class-I aminoacyl-tRNA synthetase family.

Its subcellular location is the cytoplasm. It carries out the reaction tRNA(Leu) + L-leucine + ATP = L-leucyl-tRNA(Leu) + AMP + diphosphate. The polypeptide is Leucine--tRNA ligase (Borrelia garinii subsp. bavariensis (strain ATCC BAA-2496 / DSM 23469 / PBi) (Borreliella bavariensis)).